The following is a 710-amino-acid chain: Putative membrane protein IgaA homolog (710 aa).

Methionine 1 is a topological domain (periplasmic). The helical transmembrane segment at 2–22 (STILIFIAALLACSLLAIWRF) threads the bilayer. Topologically, residues 23-204 (RVKSRRGSLP…YALSRPAGLR (182 aa)) are cytoplasmic. Transmembrane regions (helical) follow at residues 205–225 (EALL…TPDV) and 226–246 (FVPW…WGLF). Residues 247 to 339 (APPSKSALRE…KNFPLQHWLR (93 aa)) are Cytoplasmic-facing. The helical transmembrane segment at 340–360 (STVIAIGSLLVLFMLLFWIPL) threads the bilayer. At 361–656 (DMPIKFTLSW…PDKSGWWRYL (296 aa)) the chain is on the periplasmic side. Residues 657–677 (GTTLLMLAMIVSAVYNGIQAF) form a helical membrane-spanning segment. Over 678–710 (RRYQRHRTRMADIQEYYESCLNPRLTVSPENLI) the chain is Cytoplasmic.

This sequence belongs to the IgaA family.

The protein localises to the cell inner membrane. In Salmonella typhi, this protein is Putative membrane protein IgaA homolog (yrfF).